The primary structure comprises 195 residues: ATP-dependent Clp protease proteolytic subunit (195 aa).

Ser97 functions as the Nucleophile in the catalytic mechanism. His122 is an active-site residue.

This sequence belongs to the peptidase S14 family. As to quaternary structure, fourteen ClpP subunits assemble into 2 heptameric rings which stack back to back to give a disk-like structure with a central cavity, resembling the structure of eukaryotic proteasomes.

It localises to the cytoplasm. The enzyme catalyses Hydrolysis of proteins to small peptides in the presence of ATP and magnesium. alpha-casein is the usual test substrate. In the absence of ATP, only oligopeptides shorter than five residues are hydrolyzed (such as succinyl-Leu-Tyr-|-NHMec, and Leu-Tyr-Leu-|-Tyr-Trp, in which cleavage of the -Tyr-|-Leu- and -Tyr-|-Trp bonds also occurs).. In terms of biological role, cleaves peptides in various proteins in a process that requires ATP hydrolysis. Has a chymotrypsin-like activity. Plays a major role in the degradation of misfolded proteins. In Lactobacillus gasseri (strain ATCC 33323 / DSM 20243 / BCRC 14619 / CIP 102991 / JCM 1131 / KCTC 3163 / NCIMB 11718 / NCTC 13722 / AM63), this protein is ATP-dependent Clp protease proteolytic subunit.